The sequence spans 670 residues: UvrABC system protein B (670 aa).

Positions 26 to 414 (EGLEDGLAHQ…GGDVIDQVVR (389 aa)) constitute a Helicase ATP-binding domain. ATP is bound at residue 39-46 (GVTGSGKT). The Beta-hairpin motif lies at 92–115 (YYDYYQPEAYVPSSDTFIEKDASV). A Helicase C-terminal domain is found at 431-597 (QVDDLLSEIR…GINKKISDIL (167 aa)). Residues 630-665 (ELKIRELESKMLTHAQNLEFEEAAALRDEVQVLRAQ) form the UVR domain.

It belongs to the UvrB family. In terms of assembly, forms a heterotetramer with UvrA during the search for lesions. Interacts with UvrC in an incision complex.

The protein localises to the cytoplasm. In terms of biological role, the UvrABC repair system catalyzes the recognition and processing of DNA lesions. A damage recognition complex composed of 2 UvrA and 2 UvrB subunits scans DNA for abnormalities. Upon binding of the UvrA(2)B(2) complex to a putative damaged site, the DNA wraps around one UvrB monomer. DNA wrap is dependent on ATP binding by UvrB and probably causes local melting of the DNA helix, facilitating insertion of UvrB beta-hairpin between the DNA strands. Then UvrB probes one DNA strand for the presence of a lesion. If a lesion is found the UvrA subunits dissociate and the UvrB-DNA preincision complex is formed. This complex is subsequently bound by UvrC and the second UvrB is released. If no lesion is found, the DNA wraps around the other UvrB subunit that will check the other stand for damage. The protein is UvrABC system protein B of Pectobacterium atrosepticum (strain SCRI 1043 / ATCC BAA-672) (Erwinia carotovora subsp. atroseptica).